The sequence spans 689 residues: Beta-adrenergic receptor kinase 1 (689 aa).

Residues 1–190 form an N-terminal region; it reads MADLEAVLAD…ELNIHLTMND (190 aa). The 122-residue stretch at 54 to 175 folds into the RGS domain; the sequence is TFEKIFSQKL…IESDKFTRFC (122 aa). In terms of domain architecture, Protein kinase spans 191–453; sequence FSVHRIIGRG…AQEVKESPFF (263 aa). ATP-binding positions include 197–205 and lysine 220; that span reads IGRGGFGEV. Aspartate 317 serves as the catalytic Proton acceptor. An AGC-kinase C-terminal domain is found at 454–521; that stretch reads RSLDWQMVFL…TISERWQQEV (68 aa). Residues 558–652 form the PH domain; that stretch reads DCIMHGYMSK…WKKELRDAYR (95 aa). A Phosphoserine modification is found at serine 670.

This sequence belongs to the protein kinase superfamily. AGC Ser/Thr protein kinase family. GPRK subfamily. As to quaternary structure, interacts with the heterodimer formed by GNB1 and GNG2. Interacts with GIT1. Interacts with, and phosphorylates chemokine-stimulated CCR5. Interacts with ARRB1. Interacts with LPAR1 and LPAR2. Interacts with RALA in response to LPAR1 activation. ADRBK1 and RALA mutually inhibit each other's binding to LPAR1. Interacts with ADRB2. In terms of tissue distribution, expressed in peripheral blood leukocytes.

It localises to the cytoplasm. Its subcellular location is the cell membrane. The protein localises to the postsynapse. It is found in the presynapse. The enzyme catalyses [beta-adrenergic receptor] + ATP = [beta-adrenergic receptor]-phosphate + ADP + H(+). In contrast to other AGC family kinases, the catalytic activity is solely regulated by the binding of substrates and ligands, not by phosphorylation of the kinase domain. Specifically phosphorylates the agonist-occupied form of the beta-adrenergic and closely related receptors, probably inducing a desensitization of them. Key regulator of LPAR1 signaling. Competes with RALA for binding to LPAR1 thus affecting the signaling properties of the receptor. Desensitizes LPAR1 and LPAR2 in a phosphorylation-independent manner. Positively regulates ciliary smoothened (SMO)-dependent Hedgehog (Hh) signaling pathway by facilitating the trafficking of SMO into the cilium and the stimulation of SMO activity. Inhibits relaxation of airway smooth muscle in response to blue light. The chain is Beta-adrenergic receptor kinase 1 from Homo sapiens (Human).